The primary structure comprises 352 residues: 4-hydroxy-3-methylbut-2-en-1-yl diphosphate synthase (flavodoxin) (352 aa).

[4Fe-4S] cluster-binding residues include Cys263, Cys266, Cys298, and Glu305.

The protein belongs to the IspG family. [4Fe-4S] cluster serves as cofactor.

It catalyses the reaction (2E)-4-hydroxy-3-methylbut-2-enyl diphosphate + oxidized [flavodoxin] + H2O + 2 H(+) = 2-C-methyl-D-erythritol 2,4-cyclic diphosphate + reduced [flavodoxin]. It functions in the pathway isoprenoid biosynthesis; isopentenyl diphosphate biosynthesis via DXP pathway; isopentenyl diphosphate from 1-deoxy-D-xylulose 5-phosphate: step 5/6. In terms of biological role, converts 2C-methyl-D-erythritol 2,4-cyclodiphosphate (ME-2,4cPP) into 1-hydroxy-2-methyl-2-(E)-butenyl 4-diphosphate. The sequence is that of 4-hydroxy-3-methylbut-2-en-1-yl diphosphate synthase (flavodoxin) from Sulfurimonas denitrificans (strain ATCC 33889 / DSM 1251) (Thiomicrospira denitrificans (strain ATCC 33889 / DSM 1251)).